Here is a 247-residue protein sequence, read N- to C-terminus: Probable transcriptional regulatory protein BT_0627 (247 aa).

It belongs to the TACO1 family.

It localises to the cytoplasm. The polypeptide is Probable transcriptional regulatory protein BT_0627 (Bacteroides thetaiotaomicron (strain ATCC 29148 / DSM 2079 / JCM 5827 / CCUG 10774 / NCTC 10582 / VPI-5482 / E50)).